A 513-amino-acid polypeptide reads, in one-letter code: Glucose-6-phosphate 1-dehydrogenase 2 (513 aa).

Alanine 2 is subject to N-acetylalanine. Serine 8 bears the Phosphoserine mark. Threonine 10 is modified (phosphothreonine). Residues 38–45 (GASGDLAK) and arginine 72 contribute to the NADP(+) site. Lysine 89 is modified (N6-acetyllysine). NADP(+) is bound by residues tyrosine 147 and lysine 171. D-glucose 6-phosphate-binding positions include lysine 171, 201–205 (HYLDK), glutamate 239, and aspartate 258. At lysine 171 the chain carries N6-(2-hydroxyisobutyryl)lysine; alternate. An N6-acetyllysine; alternate modification is found at lysine 171. Histidine 263 (proton acceptor) is an active-site residue. Arginine 357 is an NADP(+) binding site. 2 residues coordinate D-glucose 6-phosphate: lysine 360 and arginine 365. Positions 366, 370, and 393 each coordinate NADP(+). Residue glutamine 395 coordinates D-glucose 6-phosphate. Position 421–423 (421–423 (DLT)) interacts with NADP(+). Position 432 is an N6-acetyllysine (lysine 432). Residues arginine 487 and tyrosine 503 each contribute to the NADP(+) site. Tyrosine 503 bears the Phosphotyrosine mark.

It belongs to the glucose-6-phosphate dehydrogenase family. In terms of assembly, homotetramer; dimer of dimers. Interacts with SIRT2; the interaction is enhanced by H(2)O(2) treatment. Post-translationally, acetylated by ELP3; acetylation inhibits its homodimerization and enzyme activity. Deacetylated by SIRT2; deacetylation stimulates its enzyme activity. In terms of tissue distribution, testis.

It localises to the cytoplasm. It is found in the cytosol. The protein localises to the membrane. The catalysed reaction is D-glucose 6-phosphate + NADP(+) = 6-phospho-D-glucono-1,5-lactone + NADPH + H(+). Its pathway is carbohydrate degradation; pentose phosphate pathway; D-ribulose 5-phosphate from D-glucose 6-phosphate (oxidative stage): step 1/3. Functionally, catalyzes the rate-limiting step of the oxidative pentose-phosphate pathway, which represents a route for the dissimilation of carbohydrates besides glycolysis. The main function of this enzyme is to provide reducing power (NADPH) and pentose phosphates for fatty acid and nucleic acid synthesis. The chain is Glucose-6-phosphate 1-dehydrogenase 2 (G6pd2) from Mus musculus (Mouse).